The sequence spans 403 residues: Phosphoglycerate kinase (403 aa).

Residues 21 to 23 (DFN), arginine 36, 59 to 62 (HLGR), arginine 119, and arginine 159 contribute to the substrate site. Residues lysine 214, glycine 301, glutamate 332, and 359-362 (GGDS) contribute to the ATP site.

It belongs to the phosphoglycerate kinase family. Monomer.

It localises to the cytoplasm. It catalyses the reaction (2R)-3-phosphoglycerate + ATP = (2R)-3-phospho-glyceroyl phosphate + ADP. It functions in the pathway carbohydrate degradation; glycolysis; pyruvate from D-glyceraldehyde 3-phosphate: step 2/5. In Lactobacillus helveticus (strain DPC 4571), this protein is Phosphoglycerate kinase.